The chain runs to 1030 residues: Zinc finger and SCAN domain-containing protein 20 (1030 aa).

Residues 22 to 42 form a disordered region; sequence DSWGSDSRPEKESHSPVPGPE. Positions 45–127 constitute an SCAN box domain; sequence RRCFRQFRYR…ALVEDWHREA (83 aa). 4 disordered regions span residues 178 to 201, 213 to 285, 411 to 441, and 578 to 600; these read DLSK…PTVP, GKSQ…DSAQ, SGGP…WEPE, and TGLP…GEME. Basic and acidic residues predominate over residues 225 to 240; sequence AKKEPCQDPAGGDRGD. Composition is skewed to acidic residues over residues 426-441 and 589-600; these read SDTE…WEPE and EADDQEAWGEME. The segment at 697 to 719 adopts a C2H2-type 1; degenerate zinc-finger fold; it reads YGCDTRAKSFSRKVHFFAPQRTH. The C2H2-type 2; degenerate zinc-finger motif lies at 725-747; it reads YKCLGSGKSFSDRANLSTHQRIH. 2 C2H2-type zinc fingers span residues 753–775 and 781–803; these read YRCL…QRTH and YKCG…QRVH. Disordered regions lie at residues 801 to 820 and 828 to 850; these read RVHL…NFGQ and WRRN…ADSP. 6 C2H2-type zinc fingers span residues 862 to 884, 890 to 912, 918 to 940, 946 to 968, 974 to 996, and 1002 to 1024; these read YSCP…QRIH, YECA…RRTH, HKCA…QRVH, YECP…QRIH, YKCR…QRIH, and YKCT…RRTH.

Belongs to the krueppel C2H2-type zinc-finger protein family.

It is found in the nucleus. Its function is as follows. May be involved in transcriptional regulation. This Mus musculus (Mouse) protein is Zinc finger and SCAN domain-containing protein 20 (Zscan20).